The following is a 458-amino-acid chain: Ammonium transporter Rh type B (458 aa).

Residues 1-13 (MAGSPSRAAGRRL) are Cytoplasmic-facing. Residues 14 to 34 (QLPLLCLFLQGATAVLFAVFV) traverse the membrane as a helical segment. Over 35–61 (RYNHKTDAALWHRSNHSNADNEFYFRY) the chain is Extracellular. Asn49 is a glycosylation site (N-linked (GlcNAc...) asparagine). A helical transmembrane segment spans residues 62–82 (PSFQDVHAMVFVGFGFLMVFL). Over 83–86 (QRYG) the chain is Cytoplasmic. Residues 87 to 107 (FSSVGFTFLLAAFALQWSTLV) form a helical membrane-spanning segment. Topologically, residues 108–124 (QGFLHSFHGGHIHVGVE) are extracellular. Residues 125–145 (SMINADFCAGAVLISFGAVLG) traverse the membrane as a helical segment. At 146-149 (KTGP) the chain is on the cytoplasmic side. Residues 150–170 (AQLLLMALLEVVLFGINEFVL) traverse the membrane as a helical segment. Over 171 to 178 (LHLLGVRD) the chain is Extracellular. Residues 179–201 (AGGSMTIHTFGAYFGLVLSRVLY) form a helical membrane-spanning segment. Topologically, residues 202-219 (RPQLEKSKHRQGSVYHSD) are cytoplasmic. Residues 220-240 (LFAMIGTIFLWIFWPSFNAAL) form a helical membrane-spanning segment. Residues 241–251 (TALGAGQHRTA) lie on the Extracellular side of the membrane. A helical transmembrane segment spans residues 252–272 (LNTYYSLAASTLGTFALSALV). Topologically, residues 273-282 (GEDGRLDMVH) are cytoplasmic. Residues 283–303 (IQNAALAGGVVVGTSSEMMLT) form a helical membrane-spanning segment. A topological domain (extracellular) is located at residue Pro304. Residues 305 to 325 (FGALTAGFLAGTVSTLGYKFF) form a helical membrane-spanning segment. Topologically, residues 326 to 346 (RPILESKFKVQDTCGVHNLHG) are cytoplasmic. The chain crosses the membrane as a helical span at residues 347-367 (MPGVLGALLGVLVAGLATHEA). The Extracellular segment spans residues 368-393 (YGDGLESVFPLIAEGQRSATSQAMHQ). A helical membrane pass occupies residues 394-414 (LFGLFVTLMFASVGGGLGGLL). The Cytoplasmic portion of the chain corresponds to 415–458 (LKLPFLDSPPDSQCYEDQVHWQVPGEHEDKAQRPLRVEEADTQA). An interaction with ANK3 region spans residues 416–424 (KLPFLDSPP). A Basolateral sorting signal motif is present at residues 429–432 (YEDQ). Residues 439-458 (GEHEDKAQRPLRVEEADTQA) form a disordered region.

It belongs to the ammonium transporter (TC 2.A.49) family. Rh subfamily. As to quaternary structure, interacts (via C-terminus) with ANK2 and ANK3; required for targeting to the basolateral membrane. N-glycosylated.

It is found in the cell membrane. Its subcellular location is the basolateral cell membrane. It carries out the reaction NH4(+)(in) = NH4(+)(out). It catalyses the reaction methylamine(out) = methylamine(in). The enzyme catalyses CO2(out) = CO2(in). Its function is as follows. Ammonium transporter involved in the maintenance of acid-base homeostasis. Transports ammonium and its related derivative methylammonium across the basolateral plasma membrane of epithelial cells likely contributing to renal transepithelial ammonia transport and ammonia metabolism. May transport either NH4(+) or NH3 ammonia species predominantly mediating an electrogenic NH4(+) transport. May act as a CO2 channel providing for renal acid secretion. The polypeptide is Ammonium transporter Rh type B (RHBG) (Pan troglodytes (Chimpanzee)).